The primary structure comprises 272 residues: Methylesterase 8 (272 aa).

Ser102 (acyl-ester intermediate) is an active-site residue. Residues Asp222 and His250 each act as charge relay system in the active site.

It belongs to the AB hydrolase superfamily. Methylesterase family.

In terms of biological role, methylesterase shown to have carboxylesterase activity in vitro. In Arabidopsis thaliana (Mouse-ear cress), this protein is Methylesterase 8.